Consider the following 198-residue polypeptide: Large ribosomal subunit protein bL27c (198 aa).

The transit peptide at 1 to 58 (MAMATSMSLNLIGAFKGLSLSSTSSFLRGDLSFSPKTSFTVTLPLENLQAPIPLTIES) directs the protein to the chloroplast.

This sequence belongs to the bacterial ribosomal protein bL27 family. Part of the 50S ribosomal subunit.

It localises to the plastid. It is found in the chloroplast. The polypeptide is Large ribosomal subunit protein bL27c (RPL27) (Arabidopsis thaliana (Mouse-ear cress)).